A 449-amino-acid chain; its full sequence is Glucose-6-phosphate isomerase (449 aa).

The active-site Proton donor is the Glu-291. Active-site residues include His-312 and Lys-426.

It belongs to the GPI family.

Its subcellular location is the cytoplasm. The enzyme catalyses alpha-D-glucose 6-phosphate = beta-D-fructose 6-phosphate. Its pathway is carbohydrate biosynthesis; gluconeogenesis. It functions in the pathway carbohydrate degradation; glycolysis; D-glyceraldehyde 3-phosphate and glycerone phosphate from D-glucose: step 2/4. Functionally, catalyzes the reversible isomerization of glucose-6-phosphate to fructose-6-phosphate. The sequence is that of Glucose-6-phosphate isomerase from Streptococcus pyogenes serotype M6 (strain ATCC BAA-946 / MGAS10394).